A 317-amino-acid polypeptide reads, in one-letter code: Melanocyte-stimulating hormone receptor (317 aa).

Over 1–37 (MPVQGSQRRLLGSLNSTPTATPKLGLAANQTGAWCLE) the chain is Extracellular. An N-linked (GlcNAc...) asparagine glycan is attached at asparagine 29. Residues 38–63 (VSIPDGLFLSLGLVSLVENVLVVAAI) form a helical membrane-spanning segment. Residues 64 to 72 (AKNRNLHSP) lie on the Cytoplasmic side of the membrane. A helical membrane pass occupies residues 73-93 (MYCFICCLALSDLLVSGSNML). Residues 94–118 (ETAVILLLEAGALAARAAVVQQLDN) are Extracellular-facing. A helical transmembrane segment spans residues 119–140 (VIDVITCSSMLSSLCFLGAIAV). Over 141–163 (DRYISIFYALRYHSIVTLPRAQR) the chain is Cytoplasmic. Residues 164 to 183 (VVAAIWVASVLFSTLFIAYY) form a helical membrane-spanning segment. Over 184-191 (DHAAVLLC) the chain is Extracellular. The helical transmembrane segment at 192 to 211 (LVVFFLAMLVLMAVLYVHML) threads the bilayer. Residues 212 to 240 (ARACQHAQGIAQLHKRQRPAHQGFGLKGA) lie on the Cytoplasmic side of the membrane. A helical membrane pass occupies residues 241 to 266 (ATLTILLGIFFLCWGPFFLHLTLIVL). Topologically, residues 267 to 279 (CPQHPTCSCIFKN) are extracellular. The chain crosses the membrane as a helical span at residues 280–300 (FNLFLALIICNAIIDPLIYAF). Residues 301–317 (RSQELRRTLKEVLLCSW) lie on the Cytoplasmic side of the membrane. Cysteine 315 carries the S-palmitoyl cysteine lipid modification.

The protein belongs to the G-protein coupled receptor 1 family. In terms of assembly, interacts with MGRN1, but does not undergo MGRN1-mediated ubiquitination; this interaction competes with GNAS-binding and thus inhibits agonist-induced cAMP production. Interacts with OPN3; the interaction results in a decrease in MC1R-mediated cAMP signaling and ultimately a decrease in melanin production in melanocytes.

Its subcellular location is the cell membrane. In terms of biological role, receptor for MSH (alpha, beta and gamma) and ACTH. The activity of this receptor is mediated by G proteins which activate adenylate cyclase. Mediates melanogenesis, the production of eumelanin (black/brown) and phaeomelanin (red/yellow), via regulation of cAMP signaling in melanocytes. The sequence is that of Melanocyte-stimulating hormone receptor (MC1R) from Colobus guereza (Mantled guereza).